The primary structure comprises 175 residues: Large ribosomal subunit protein uL6 (175 aa).

This sequence belongs to the universal ribosomal protein uL6 family. As to quaternary structure, part of the 50S ribosomal subunit.

Functionally, this protein binds to the 23S rRNA, and is important in its secondary structure. It is located near the subunit interface in the base of the L7/L12 stalk, and near the tRNA binding site of the peptidyltransferase center. The chain is Large ribosomal subunit protein uL6 from Xylella fastidiosa (strain M12).